The following is a 157-amino-acid chain: Putative tRNA (cytidine(34)-2'-O)-methyltransferase (157 aa).

Residues isoleucine 79, glycine 104, and isoleucine 125 each contribute to the S-adenosyl-L-methionine site.

The protein belongs to the class IV-like SAM-binding methyltransferase superfamily. RNA methyltransferase TrmH family. TrmL subfamily.

It is found in the cytoplasm. It carries out the reaction cytidine(34) in tRNA + S-adenosyl-L-methionine = 2'-O-methylcytidine(34) in tRNA + S-adenosyl-L-homocysteine + H(+). The enzyme catalyses 5-carboxymethylaminomethyluridine(34) in tRNA(Leu) + S-adenosyl-L-methionine = 5-carboxymethylaminomethyl-2'-O-methyluridine(34) in tRNA(Leu) + S-adenosyl-L-homocysteine + H(+). In terms of biological role, could methylate the ribose at the nucleotide 34 wobble position in tRNA. In Geobacillus stearothermophilus (Bacillus stearothermophilus), this protein is Putative tRNA (cytidine(34)-2'-O)-methyltransferase.